A 150-amino-acid polypeptide reads, in one-letter code: UPF0208 membrane protein VC_1099 (150 aa).

2 helical membrane passes run 42–62 and 70–90; these read FAIK…MVFA and AIVV…WLGH.

It belongs to the UPF0208 family.

The protein resides in the cell inner membrane. The polypeptide is UPF0208 membrane protein VC_1099 (Vibrio cholerae serotype O1 (strain ATCC 39315 / El Tor Inaba N16961)).